A 245-amino-acid chain; its full sequence is Uridylate kinase (245 aa).

20-23 contributes to the ATP binding site; that stretch reads KLSG. Glycine 60 lines the UMP pocket. 2 residues coordinate ATP: glycine 61 and arginine 65. Residues aspartate 80 and 141–148 each bind UMP; that span reads AGLPYFST. The ATP site is built by tyrosine 175 and aspartate 178.

The protein belongs to the UMP kinase family. As to quaternary structure, homohexamer.

It localises to the cytoplasm. The enzyme catalyses UMP + ATP = UDP + ADP. The protein operates within pyrimidine metabolism; CTP biosynthesis via de novo pathway; UDP from UMP (UMPK route): step 1/1. With respect to regulation, inhibited by UTP. Catalyzes the reversible phosphorylation of UMP to UDP. The polypeptide is Uridylate kinase (Arthrobacter sp. (strain FB24)).